The sequence spans 827 residues: Periplasmic nitrate reductase (827 aa).

The segment at residues 1-32 (MELNRRDFMKANAAMAAAAAAGMTIPVKNVYA) is a signal peptide (tat-type signal). A 4Fe-4S Mo/W bis-MGD-type domain is found at 37–93 (IRWDKAPCRFCGTGCSVLVGTKDGRVVATQGDPDAEVNRGLNCIKGYFLSKIMYGAD). Cys-44, Cys-47, Cys-51, and Cys-79 together coordinate [4Fe-4S] cluster. Mo-bis(molybdopterin guanine dinucleotide) contacts are provided by residues Lys-81, Gln-148, Asn-173, Cys-177, 210-217 (WGSNMAEM), 241-245 (STFEH), Met-371, Gln-375, Asn-481, 507-508 (SD), Lys-530, Asp-557, and 717-726 (TGRVLEHWHT). Position 793 (Phe-793) interacts with substrate. Residues Asn-801 and Lys-818 each coordinate Mo-bis(molybdopterin guanine dinucleotide).

This sequence belongs to the prokaryotic molybdopterin-containing oxidoreductase family. NasA/NapA/NarB subfamily. Component of the periplasmic nitrate reductase NapAB complex composed of NapA and NapB. It depends on [4Fe-4S] cluster as a cofactor. Mo-bis(molybdopterin guanine dinucleotide) serves as cofactor. In terms of processing, predicted to be exported by the Tat system. The position of the signal peptide cleavage has not been experimentally proven.

It is found in the periplasm. The enzyme catalyses 2 Fe(II)-[cytochrome] + nitrate + 2 H(+) = 2 Fe(III)-[cytochrome] + nitrite + H2O. Its function is as follows. Catalytic subunit of the periplasmic nitrate reductase complex NapAB. Receives electrons from NapB and catalyzes the reduction of nitrate to nitrite. The polypeptide is Periplasmic nitrate reductase (Actinobacillus pleuropneumoniae serotype 7 (strain AP76)).